Reading from the N-terminus, the 921-residue chain is Leucine--tRNA ligase (921 aa).

Residues P41–H52 carry the 'HIGH' region motif. Residues K695–S699 carry the 'KMSKS' region motif. K698 contributes to the ATP binding site.

This sequence belongs to the class-I aminoacyl-tRNA synthetase family.

It is found in the cytoplasm. The catalysed reaction is tRNA(Leu) + L-leucine + ATP = L-leucyl-tRNA(Leu) + AMP + diphosphate. In Cytophaga hutchinsonii (strain ATCC 33406 / DSM 1761 / CIP 103989 / NBRC 15051 / NCIMB 9469 / D465), this protein is Leucine--tRNA ligase.